Consider the following 1249-residue polypeptide: Myosin-1 (1249 aa).

Residues 1 to 42 (MGHSRRPAGGEKKSRGFGRSKAVADVGDGRQTGGKPQVKKAT) are disordered. The region spanning 51 to 730 (IGVSDLTLLS…TLFALEAMRD (680 aa)) is the Myosin motor domain. 144–151 (GESGAGKT) contacts ATP. Ser-372 is modified (phosphoserine). Positions 419–501 (SIGILDIYGF…PGVFAALNDA (83 aa)) are actin-binding. 2 IQ domains span residues 734–754 (HNMA…RTEC) and 755–780 (AIRI…QGHQ). The TH1 domain occupies 788–978 (RRRMSLLGSR…TIHTGPGEPA (191 aa)). 2 disordered regions span residues 962–1079 (DDSY…PKKP) and 1126–1249 (WTPE…DDDW). Over residues 1021–1035 (AAQPLPRATPQPAEP) the composition is skewed to pro residues. Positions 1036 to 1051 (QPAARAVPQPVAAVAA) are enriched in low complexity. Pro residues-rich tracts occupy residues 1064-1077 (APPP…PAPK) and 1139-1150 (TPKPAPPPPPAA). The SH3 domain maps to 1076 to 1137 (PKKPTAKVLY…PEAYLEEQVA (62 aa)). A compositionally biased stretch (low complexity) spans 1151 to 1169 (PRSTPAPATNGAAAAAKAK). A compositionally biased stretch (polar residues) spans 1200 to 1221 (VSMNSHDSSGGSGRGTPNSMSN). Positions 1222–1231 (ASLAGGLAEA) are enriched in low complexity.

This sequence belongs to the TRAFAC class myosin-kinesin ATPase superfamily. Myosin family. In terms of processing, phosphorylation of the TEDS site (Ser-372) is required for the polarization of the actin cytoskeleton. Phosphorylation probably activates the myosin-I ATPase activity.

It is found in the cytoplasm. The protein resides in the cytoskeleton. The protein localises to the actin patch. Its function is as follows. Type-I myosin implicated in the organization of the actin cytoskeleton. Required for proper actin cytoskeleton polarization. At the cell cortex, assembles in patch-like structures together with proteins from the actin-polymerizing machinery and promotes actin assembly. Functions as actin nucleation-promoting factor (NPF) for the Arp2/3 complex. Plays an important role in polarized growth, spore germination, hyphal morphogenesis, and septal wall formation. The protein is Myosin-1 (myoA) of Aspergillus fumigatus (strain ATCC MYA-4609 / CBS 101355 / FGSC A1100 / Af293) (Neosartorya fumigata).